The sequence spans 233 residues: ATP synthase subunit a, chloroplastic (233 aa).

4 helical membrane passes run 82–102 (VPFI…GALI), 121–141 (INTT…AGIS), 177–199 (LFGN…PLIV), and 211–231 (SSIQ…EAIE).

Belongs to the ATPase A chain family. In terms of assembly, F-type ATPases have 2 components, CF(1) - the catalytic core - and CF(0) - the membrane proton channel. CF(1) has five subunits: alpha(3), beta(3), gamma(1), delta(1), epsilon(1). CF(0) has four main subunits: a, b, b' and c.

The protein localises to the plastid. It is found in the chloroplast thylakoid membrane. In terms of biological role, key component of the proton channel; it plays a direct role in the translocation of protons across the membrane. In Galdieria sulphuraria (Red alga), this protein is ATP synthase subunit a, chloroplastic.